Here is a 239-residue protein sequence, read N- to C-terminus: MKIIVTKDNIEGGTKAFEIIKKGMEDGDKVLGLATGSSPIPLYDDMCDSDLDFSDMTSINLDEYYGLNPDNDQSYHYFMQKHLFDKKPFKHSYIPNGMAKDIDEEVDRYNDIIAANPIDIQILGIGRNGHIAFNEPGTPFGSLTHKVQLTESTIKANSRFFDNEDEVPRQAICMGIKSIMQSKKIVLLAFGESKQDAVKALVEGPVTEEVPASILQDHPDVTVICDEVAAAKLDPKYRN.

Aspartate 62 functions as the Proton acceptor; for enolization step in the catalytic mechanism. Asparagine 128 acts as the For ring-opening step in catalysis. Histidine 130 functions as the Proton acceptor; for ring-opening step in the catalytic mechanism. The active-site For ring-opening step is the glutamate 135.

The protein belongs to the glucosamine/galactosamine-6-phosphate isomerase family. NagB subfamily.

The enzyme catalyses alpha-D-glucosamine 6-phosphate + H2O = beta-D-fructose 6-phosphate + NH4(+). The protein operates within amino-sugar metabolism; N-acetylneuraminate degradation; D-fructose 6-phosphate from N-acetylneuraminate: step 5/5. Its function is as follows. Catalyzes the reversible isomerization-deamination of glucosamine 6-phosphate (GlcN6P) to form fructose 6-phosphate (Fru6P) and ammonium ion. This is Glucosamine-6-phosphate deaminase from Lactobacillus johnsonii (strain CNCM I-12250 / La1 / NCC 533).